Here is a 485-residue protein sequence, read N- to C-terminus: MMHFKSGLELTELQNMTVPEDDNVSNDSNDFTEVENGQINSKFISDRESRRSLTNSHLEKRKCDEYIPGTTSLGMSVFNLSNAIMGSGILGLAFALANTGILLFLILLTSVTLLSIYSINLLLICSKETGCMVYEKLGEQVFGTTGKLVIFGATSLQNTGAMLSYLFIVKNELPSAIKSLMGEEDAFSAWYVDGRVLVVMVTFGIILPLCLLKNLGYLGYTSGFSLSCMMFFLIVVIYKKFQTPCMSVEQNSTVSANVTDACTPKYVTFNSKTVYALPTIAFAFVCHPSVLPIYSELKDRSQKKMQMVSNISFFAMFVMYFLTAIFGYLTFYEKVQSDLLHKYQSTGDILILTVRLAVIVAVILTVPVLFFTVRSSLFELAKKTKFHLCRHVLVTIILLIIINLLVIFIPSMKDIFGVVGVTSANMLIFILPSSLYLKITNQDGDKGTQRIWAALFLGLGVLFSLISIPLVIYDWACSSGTDEGH.

Residues 1 to 74 (MMHFKSGLEL…EYIPGTTSLG (74 aa)) lie on the Cytoplasmic side of the membrane. Phosphoserine is present on S6. The residue at position 11 (T11) is a Phosphothreonine. Residues S25, S28, S49, and S52 each carry the phosphoserine modification. T54 is subject to Phosphothreonine. Residue S56 is modified to Phosphoserine. A helical transmembrane segment spans residues 75–97 (MSVFNLSNAIMGSGILGLAFALA). Topologically, residues 98–112 (NTGILLFLILLTSVT) are extracellular. A helical transmembrane segment spans residues 113–133 (LLSIYSINLLLICSKETGCMV). Residues 134-148 (YEKLGEQVFGTTGKL) are Cytoplasmic-facing. The chain crosses the membrane as a helical span at residues 149 to 169 (VIFGATSLQNTGAMLSYLFIV). Residues 170–188 (KNELPSAIKSLMGEEDAFS) are Extracellular-facing. A helical membrane pass occupies residues 189–211 (AWYVDGRVLVVMVTFGIILPLCL). Over 212 to 216 (LKNLG) the chain is Cytoplasmic. The chain crosses the membrane as a helical span at residues 217-237 (YLGYTSGFSLSCMMFFLIVVI). Residues 238 to 273 (YKKFQTPCMSVEQNSTVSANVTDACTPKYVTFNSKT) lie on the Extracellular side of the membrane. Residues C245 and C262 are joined by a disulfide bond. N251 and N257 each carry an N-linked (GlcNAc...) asparagine glycan. Residues 274–294 (VYALPTIAFAFVCHPSVLPIY) traverse the membrane as a helical segment. Over 295–310 (SELKDRSQKKMQMVSN) the chain is Cytoplasmic. Residues 311 to 331 (ISFFAMFVMYFLTAIFGYLTF) traverse the membrane as a helical segment. At 332 to 348 (YEKVQSDLLHKYQSTGD) the chain is on the extracellular side. The chain crosses the membrane as a helical span at residues 349 to 369 (ILILTVRLAVIVAVILTVPVL). The Cytoplasmic portion of the chain corresponds to 370–391 (FFTVRSSLFELAKKTKFHLCRH). Residues 392–412 (VLVTIILLIIINLLVIFIPSM) traverse the membrane as a helical segment. Residues 413–414 (KD) are Extracellular-facing. Residues 415–435 (IFGVVGVTSANMLIFILPSSL) form a helical membrane-spanning segment. Residues 436-450 (YLKITNQDGDKGTQR) are Cytoplasmic-facing. The helical transmembrane segment at 451–471 (IWAALFLGLGVLFSLISIPLV) threads the bilayer. Over 472–485 (IYDWACSSGTDEGH) the chain is Extracellular.

This sequence belongs to the amino acid/polyamine transporter 2 family. Post-translationally, N-glycosylation plays an important role in the L-glutamine transport. In terms of tissue distribution, specifically expressed in brain and retina (at protein level). Also detected in spleen, small intestine and lung.

It is found in the cell membrane. It carries out the reaction L-glutamine(in) + Na(+)(in) = L-glutamine(out) + Na(+)(out). It catalyses the reaction L-alanine(in) + Na(+)(in) = L-alanine(out) + Na(+)(out). The catalysed reaction is L-histidine(in) + Na(+)(in) = L-histidine(out) + Na(+)(out). The enzyme catalyses L-asparagine(in) + Na(+)(in) = L-asparagine(out) + Na(+)(out). It carries out the reaction L-serine(in) + Na(+)(in) = L-serine(out) + Na(+)(out). It catalyses the reaction L-cysteine(in) + Na(+)(in) = L-cysteine(out) + Na(+)(out). The catalysed reaction is L-methionine(in) + Na(+)(in) = L-methionine(out) + Na(+)(out). The enzyme catalyses glycine(in) + Na(+)(in) = glycine(out) + Na(+)(out). It carries out the reaction L-threonine(in) + Na(+)(in) = L-threonine(out) + Na(+)(out). It catalyses the reaction L-proline(in) + Na(+)(in) = L-proline(out) + Na(+)(out). Its activity is regulated as follows. Inhibited by alpha-(methylamino)isobutyric acid (MeAIB). Inhibited by lithium, potassium, choline ions, N-methylglucamine. The pH dependence has an allosteric effect on the transport. Symporter that cotransports short-chain neutral amino acids and sodium ions from the extraccellular to the intracellular side of the cell membrane. The transport is elctrogenic, pH dependent and driven by the Na(+) electrochemical gradient. Participates in the astroglia-derived glutamine transport into GABAergic interneurons for neurotransmitter GABA de novo synthesis. May also contributes to amino acid transport in placental trophoblast. Regulates synaptic plasticity. This chain is Sodium-coupled neutral amino acid symporter 1, found in Mus musculus (Mouse).